The following is a 474-amino-acid chain: tRNA-2-methylthio-N(6)-dimethylallyladenosine synthase (474 aa).

The MTTase N-terminal domain maps to Lys3–Arg120. Positions 12, 49, 83, 157, 161, and 164 each coordinate [4Fe-4S] cluster. The region spanning Arg143–Arg375 is the Radical SAM core domain. The TRAM domain maps to Arg378–Arg441.

This sequence belongs to the methylthiotransferase family. MiaB subfamily. As to quaternary structure, monomer. [4Fe-4S] cluster is required as a cofactor.

It is found in the cytoplasm. It carries out the reaction N(6)-dimethylallyladenosine(37) in tRNA + (sulfur carrier)-SH + AH2 + 2 S-adenosyl-L-methionine = 2-methylsulfanyl-N(6)-dimethylallyladenosine(37) in tRNA + (sulfur carrier)-H + 5'-deoxyadenosine + L-methionine + A + S-adenosyl-L-homocysteine + 2 H(+). Catalyzes the methylthiolation of N6-(dimethylallyl)adenosine (i(6)A), leading to the formation of 2-methylthio-N6-(dimethylallyl)adenosine (ms(2)i(6)A) at position 37 in tRNAs that read codons beginning with uridine. This is tRNA-2-methylthio-N(6)-dimethylallyladenosine synthase from Shewanella sp. (strain ANA-3).